Consider the following 94-residue polypeptide: Scorpine-like-1 (94 aa).

The signal sequence occupies residues 1–18 (MNTKFTVLIFLGVIVVSY). Residues 54–94 (EYGCMMDISWNKDCQRHCQSTEQKDGICHGMKCKCGKPRSY) form the BetaSPN-type CS-alpha/beta domain. 3 disulfides stabilise this stretch: Cys57–Cys81, Cys67–Cys86, and Cys71–Cys88.

Belongs to the long chain scorpion toxin family. Class 3 subfamily. As to expression, expressed by the venom gland.

It localises to the secreted. Its function is as follows. Has antibacterial activity. The sequence is that of Scorpine-like-1 from Urodacus yaschenkoi (Inland robust scorpion).